Here is a 122-residue protein sequence, read N- to C-terminus: Large ribosomal subunit protein uL14 (122 aa).

It belongs to the universal ribosomal protein uL14 family. Part of the 50S ribosomal subunit. Forms a cluster with proteins L3 and L19. In the 70S ribosome, L14 and L19 interact and together make contacts with the 16S rRNA in bridges B5 and B8.

Functionally, binds to 23S rRNA. Forms part of two intersubunit bridges in the 70S ribosome. In Leuconostoc mesenteroides subsp. mesenteroides (strain ATCC 8293 / DSM 20343 / BCRC 11652 / CCM 1803 / JCM 6124 / NCDO 523 / NBRC 100496 / NCIMB 8023 / NCTC 12954 / NRRL B-1118 / 37Y), this protein is Large ribosomal subunit protein uL14.